We begin with the raw amino-acid sequence, 65 residues long: Large ribosomal subunit protein bL35 (65 aa).

Residues 1 to 29 are disordered; that stretch reads MPKMKTHSGAKKRFKLTGSGKVKRQQANR.

Belongs to the bacterial ribosomal protein bL35 family.

This is Large ribosomal subunit protein bL35 from Kocuria rhizophila (strain ATCC 9341 / DSM 348 / NBRC 103217 / DC2201).